The chain runs to 112 residues: CRISPR-associated endoribonuclease Cas2 2 (112 aa).

Asp-15 contacts Mg(2+).

The protein belongs to the CRISPR-associated endoribonuclease Cas2 protein family. As to quaternary structure, homodimer, forms a heterotetramer with a Cas1 homodimer. The cofactor is Mg(2+).

Its function is as follows. CRISPR (clustered regularly interspaced short palindromic repeat), is an adaptive immune system that provides protection against mobile genetic elements (viruses, transposable elements and conjugative plasmids). CRISPR clusters contain sequences complementary to antecedent mobile elements and target invading nucleic acids. CRISPR clusters are transcribed and processed into CRISPR RNA (crRNA). Functions as a ssRNA-specific endoribonuclease. Involved in the integration of spacer DNA into the CRISPR cassette. This is CRISPR-associated endoribonuclease Cas2 2 from Rhodospirillum rubrum (strain ATCC 11170 / ATH 1.1.1 / DSM 467 / LMG 4362 / NCIMB 8255 / S1).